Consider the following 320-residue polypeptide: Aspartate carbamoyltransferase catalytic subunit (320 aa).

2 residues coordinate carbamoyl phosphate: arginine 70 and threonine 71. An L-aspartate-binding site is contributed by lysine 98. Carbamoyl phosphate is bound by residues arginine 120, histidine 150, and glutamine 153. Residues arginine 184 and arginine 239 each contribute to the L-aspartate site. The carbamoyl phosphate site is built by glycine 280 and proline 281.

This sequence belongs to the aspartate/ornithine carbamoyltransferase superfamily. ATCase family. As to quaternary structure, heterododecamer (2C3:3R2) of six catalytic PyrB chains organized as two trimers (C3), and six regulatory PyrI chains organized as three dimers (R2).

It carries out the reaction carbamoyl phosphate + L-aspartate = N-carbamoyl-L-aspartate + phosphate + H(+). Its pathway is pyrimidine metabolism; UMP biosynthesis via de novo pathway; (S)-dihydroorotate from bicarbonate: step 2/3. Catalyzes the condensation of carbamoyl phosphate and aspartate to form carbamoyl aspartate and inorganic phosphate, the committed step in the de novo pyrimidine nucleotide biosynthesis pathway. The sequence is that of Aspartate carbamoyltransferase catalytic subunit from Xylella fastidiosa (strain Temecula1 / ATCC 700964).